A 317-amino-acid chain; its full sequence is Melanocyte-stimulating hormone receptor (317 aa).

Topologically, residues 1 to 37 (MPAQGSQRGLLGAVNFTPTATPHLRPAANQTGPQCLE) are extracellular. An N-linked (GlcNAc...) asparagine glycan is attached at asparagine 29. Residues 38–63 (VSVPDGLFLCLGLVSLVENTLVVAAI) traverse the membrane as a helical segment. The Cytoplasmic segment spans residues 64-72 (AKNRNLHSP). The helical transmembrane segment at 73–93 (MYCFICCLALSDLLVSVSNLL) threads the bilayer. Over 94-118 (ETAVLLLLEVGALAAQATVVQQLGN) the chain is Extracellular. Residues 119-140 (VIDVLICSSMVSSLCSLGAIAM) form a helical membrane-spanning segment. Residues 141-163 (DRYISIFYALRYHSIVTLARARR) are Cytoplasmic-facing. A helical transmembrane segment spans residues 164-183 (AIAAVWAASILSSTLFITYY). Topologically, residues 184–191 (DRTAALLC) are extracellular. A helical membrane pass occupies residues 192-211 (LVVFFLAMLVLMALLYVHML). The Cytoplasmic portion of the chain corresponds to 212 to 240 (IQACQHAQAIARLHKRQHPVQQGWGLKGA). The chain crosses the membrane as a helical span at residues 241 to 266 (ATLTILLGVFFLCWGPFFLHLTLIAV). Topologically, residues 267–279 (CPQHPTCSCIFKN) are extracellular. The chain crosses the membrane as a helical span at residues 280 to 300 (FRLFLALIICNTIVDPLIYAF). Residues 301-317 (RSQELRRTLKEVLLFSW) are Cytoplasmic-facing.

The protein belongs to the G-protein coupled receptor 1 family. In terms of assembly, interacts with MGRN1, but does not undergo MGRN1-mediated ubiquitination; this interaction competes with GNAS-binding and thus inhibits agonist-induced cAMP production. Interacts with OPN3; the interaction results in a decrease in MC1R-mediated cAMP signaling and ultimately a decrease in melanin production in melanocytes.

The protein resides in the cell membrane. Its function is as follows. Receptor for MSH (alpha, beta and gamma) and ACTH. The activity of this receptor is mediated by G proteins which activate adenylate cyclase. Mediates melanogenesis, the production of eumelanin (black/brown) and phaeomelanin (red/yellow), via regulation of cAMP signaling in melanocytes. The sequence is that of Melanocyte-stimulating hormone receptor (MC1R) from Eulemur fulvus fulvus (Brown lemur).